The chain runs to 494 residues: Aspartyl/glutamyl-tRNA(Asn/Gln) amidotransferase subunit B (494 aa).

The protein belongs to the GatB/GatE family. GatB subfamily. Heterotrimer of A, B and C subunits.

The enzyme catalyses L-glutamyl-tRNA(Gln) + L-glutamine + ATP + H2O = L-glutaminyl-tRNA(Gln) + L-glutamate + ADP + phosphate + H(+). The catalysed reaction is L-aspartyl-tRNA(Asn) + L-glutamine + ATP + H2O = L-asparaginyl-tRNA(Asn) + L-glutamate + ADP + phosphate + 2 H(+). Allows the formation of correctly charged Asn-tRNA(Asn) or Gln-tRNA(Gln) through the transamidation of misacylated Asp-tRNA(Asn) or Glu-tRNA(Gln) in organisms which lack either or both of asparaginyl-tRNA or glutaminyl-tRNA synthetases. The reaction takes place in the presence of glutamine and ATP through an activated phospho-Asp-tRNA(Asn) or phospho-Glu-tRNA(Gln). This is Aspartyl/glutamyl-tRNA(Asn/Gln) amidotransferase subunit B from Synechococcus sp. (strain ATCC 27144 / PCC 6301 / SAUG 1402/1) (Anacystis nidulans).